The chain runs to 250 residues: Isoprenyl transferase (250 aa).

Asp-26 is an active-site residue. Asp-26 serves as a coordination point for Mg(2+). Substrate contacts are provided by residues 27–30, Trp-31, Arg-39, His-43, and 71–73; these read GNGR and STE. The active-site Proton acceptor is the Asn-74. Substrate-binding positions include Trp-75, Arg-77, Arg-198, and 204–206; that span reads RLS. Glu-217 serves as a coordination point for Mg(2+).

This sequence belongs to the UPP synthase family. Homodimer. The cofactor is Mg(2+).

Catalyzes the condensation of isopentenyl diphosphate (IPP) with allylic pyrophosphates generating different type of terpenoids. In Streptococcus agalactiae serotype III (strain NEM316), this protein is Isoprenyl transferase.